A 675-amino-acid polypeptide reads, in one-letter code: DNA ligase (675 aa).

Residues 36-40 (DAVYD), 85-86 (SL), and Glu-118 each bind NAD(+). Lys-120 acts as the N6-AMP-lysine intermediate in catalysis. 4 residues coordinate NAD(+): Arg-141, Glu-178, Lys-298, and Lys-322. 4 residues coordinate Zn(2+): Cys-416, Cys-419, Cys-434, and Cys-439. A BRCT domain is found at 598-675 (TQPQTLSGKT…SEADLLALLQ (78 aa)).

Belongs to the NAD-dependent DNA ligase family. LigA subfamily. Mg(2+) serves as cofactor. The cofactor is Mn(2+).

It catalyses the reaction NAD(+) + (deoxyribonucleotide)n-3'-hydroxyl + 5'-phospho-(deoxyribonucleotide)m = (deoxyribonucleotide)n+m + AMP + beta-nicotinamide D-nucleotide.. Functionally, DNA ligase that catalyzes the formation of phosphodiester linkages between 5'-phosphoryl and 3'-hydroxyl groups in double-stranded DNA using NAD as a coenzyme and as the energy source for the reaction. It is essential for DNA replication and repair of damaged DNA. The chain is DNA ligase from Acaryochloris marina (strain MBIC 11017).